The chain runs to 397 residues: Pyridinium-3,5-bisthiocarboxylic acid mononucleotide nickel insertion protein (397 aa).

The protein belongs to the LarC family.

It catalyses the reaction Ni(II)-pyridinium-3,5-bisthiocarboxylate mononucleotide = pyridinium-3,5-bisthiocarboxylate mononucleotide + Ni(2+). In terms of biological role, involved in the biosynthesis of a nickel-pincer cofactor ((SCS)Ni(II) pincer complex). Binds Ni(2+), and functions in nickel delivery to pyridinium-3,5-bisthiocarboxylic acid mononucleotide (P2TMN), to form the mature cofactor. Is thus probably required for the activation of nickel-pincer cofactor-dependent enzymes. In Thermotoga petrophila (strain ATCC BAA-488 / DSM 13995 / JCM 10881 / RKU-1), this protein is Pyridinium-3,5-bisthiocarboxylic acid mononucleotide nickel insertion protein.